The sequence spans 651 residues: Gag-Pro polyprotein (651 aa).

Residue Gly2 is the site of N-myristoyl glycine; by host attachment. The disordered stretch occupies residues 93–142 (QIPSRPAPPPPSSSTHDPPDSDPQIPPPYVEPTAPQVLPVMHPHGAPPNH). A Phosphoserine; by host MAPK1 modification is found at Ser105. The short motif at 118 to 121 (PPPY) is the PPXY motif element. Positions 124–127 (PTAP) match the PTAP/PSAP motif motif. 2 CCHC-type zinc fingers span residues 355 to 372 (QPCF…DCTQ) and 378 to 395 (GPCP…DCPR). Positions 476–554 (IEALLDTGAD…NNWAIIGRDA (79 aa)) constitute a Peptidase A2 domain. Asp481 serves as the catalytic For protease activity; shared with dimeric partner. The disordered stretch occupies residues 631–651 (SQLKKPMEPGDSSTTCGPLTL). Residues 641 to 651 (DSSTTCGPLTL) are compositionally biased toward polar residues.

In terms of assembly, homodimer; the homodimers are part of the immature particles. Interacts with human TSG101 and NEDD4; these interactions are essential for budding and release of viral particles. Homodimer; further assembles as homohexamers. Specific enzymatic cleavages by the viral protease yield mature proteins. The polyprotein is cleaved during and after budding, this process is termed maturation. The protease is autoproteolytically processed at its N- and C-termini. Post-translationally, phosphorylation of the matrix protein p19 by MAPK1 seems to play a role in budding. In terms of processing, myristoylated. Myristoylation of the matrix (MA) domain mediates the transport and binding of Gag polyproteins to the host plasma membrane and is required for the assembly of viral particles.

Its subcellular location is the virion. Functionally, the matrix domain targets Gag, Gag-Pro and Gag-Pro-Pol polyproteins to the plasma membrane via a multipartite membrane binding signal, that includes its myristoylated N-terminus. Matrix protein. Its function is as follows. Forms the spherical core of the virus that encapsulates the genomic RNA-nucleocapsid complex. In terms of biological role, binds strongly to viral nucleic acids and promote their aggregation. Also destabilizes the nucleic acids duplexes via highly structured zinc-binding motifs. Functionally, the aspartyl protease mediates proteolytic cleavages of Gag and Gag-Pol polyproteins during or shortly after the release of the virion from the plasma membrane. Cleavages take place as an ordered, step-wise cascade to yield mature proteins. This process is called maturation. Displays maximal activity during the budding process just prior to particle release from the cell (Potential). Cleaves the translation initiation factor eIF4G leading to the inhibition of host cap-dependent translation. This chain is Gag-Pro polyprotein (gag-pro), found in Human T-cell leukemia virus 1 (isolate Caribbea HS-35 subtype A) (HTLV-1).